The chain runs to 184 residues: UPF0397 protein SAB2561c (184 aa).

5 helical membrane-spanning segments follow: residues 11–31 (VVAI…VVIP), 44–64 (AFLA…TGLV), 77–97 (AWWS…WIGL), 111–131 (MIYF…LIAP), and 148–168 (QGVI…TILL).

Belongs to the UPF0397 family.

Its subcellular location is the cell membrane. The sequence is that of UPF0397 protein SAB2561c from Staphylococcus aureus (strain bovine RF122 / ET3-1).